The following is a 91-amino-acid chain: Acylphosphatase (91 aa).

The Acylphosphatase-like domain occupies 5–91 (RLHAIVEGEV…KGEFTSFDTY (87 aa)). Residues Arg20 and Asn38 contribute to the active site.

This sequence belongs to the acylphosphatase family.

The enzyme catalyses an acyl phosphate + H2O = a carboxylate + phosphate + H(+). This Metallosphaera sedula (strain ATCC 51363 / DSM 5348 / JCM 9185 / NBRC 15509 / TH2) protein is Acylphosphatase (acyP).